The chain runs to 90 residues: uncharacterized protein (90 aa).

The segment at 1-26 (MFKRSVSRLFCAPAPAPAPRKQPGGR) is disordered. Positions 33–66 (NLNQSVKKQLNHLEVLERIKKQRKEQKNNRNQVD) form a coiled coil.

This is an uncharacterized protein from Dictyostelium discoideum (Social amoeba).